We begin with the raw amino-acid sequence, 211 residues long: Recombination protein RecR (211 aa).

Residues 70–85 form a C4-type zinc finger; sequence CRECFLITDREVCPIC. One can recognise a Toprim domain in the interval 93–190; that stretch reads KFICVVEESQ…KITRTAYGFQ (98 aa).

This sequence belongs to the RecR family.

In terms of biological role, may play a role in DNA repair. It seems to be involved in an RecBC-independent recombinational process of DNA repair. It may act with RecF and RecO. The chain is Recombination protein RecR from Aquifex aeolicus (strain VF5).